Consider the following 184-residue polypeptide: Ras protein let-60 (184 aa).

10–17 (GDGGVGKS) provides a ligand contact to GTP. Positions 32 to 40 (YDPTIEDSY) match the Effector region motif. GTP-binding positions include 57–61 (DTAGQ) and 116–119 (NKCD). Cysteine 181 bears the Cysteine methyl ester mark. The S-farnesyl cysteine moiety is linked to residue cysteine 181. Positions 182 to 184 (QIM) are cleaved as a propeptide — removed in mature form.

The protein belongs to the small GTPase superfamily. Ras family. As to quaternary structure, interacts with soc-2. Interacts (in GTP-bound form) with plc-1 (via Ras-associating domain 1). As to expression, expressed in body wall muscles and in the nervous system including ganglion, nerve ring dorsal and ventral nerve cords, motor neurons and sensory tail neurons.

It localises to the cell membrane. The enzyme catalyses GTP + H2O = GDP + phosphate + H(+). Functionally, GTP-binding protein with GTPase activity. The level of let-60 controls the switch between vulval and hypodermal cell fates during C.elegans vulval induction. May stimulate the guanine nucleotide exchange factor (GEF) activity of rap-1. May induce nuclear condensation. In Caenorhabditis elegans, this protein is Ras protein let-60.